The primary structure comprises 164 residues: CDP-archaeol synthase (164 aa).

4 helical membrane passes run 3-23 (LFVFFALIWPPYVANGSAVLA), 53-73 (GLAIGVVLGTVVGYLPNLLHP), 77-97 (LLDALILSVAALLGDLLGAFI), and 126-146 (SLYADVPVEYIIAASVVTPII).

The protein belongs to the CDP-archaeol synthase family. It depends on Mg(2+) as a cofactor.

The protein localises to the cell membrane. The enzyme catalyses 2,3-bis-O-(geranylgeranyl)-sn-glycerol 1-phosphate + CTP + H(+) = CDP-2,3-bis-O-(geranylgeranyl)-sn-glycerol + diphosphate. It functions in the pathway membrane lipid metabolism; glycerophospholipid metabolism. Catalyzes the formation of CDP-2,3-bis-(O-geranylgeranyl)-sn-glycerol (CDP-archaeol) from 2,3-bis-(O-geranylgeranyl)-sn-glycerol 1-phosphate (DGGGP) and CTP. This reaction is the third ether-bond-formation step in the biosynthesis of archaeal membrane lipids. This chain is CDP-archaeol synthase, found in Pyrobaculum arsenaticum (strain DSM 13514 / JCM 11321 / PZ6).